A 444-amino-acid polypeptide reads, in one-letter code: Tubulin beta chain (444 aa).

GTP-binding residues include Q11, E69, S138, G142, T143, G144, N204, and N226. Residue E69 participates in Mg(2+) binding.

It belongs to the tubulin family. Dimer of alpha and beta chains. A typical microtubule is a hollow water-filled tube with an outer diameter of 25 nm and an inner diameter of 15 nM. Alpha-beta heterodimers associate head-to-tail to form protofilaments running lengthwise along the microtubule wall with the beta-tubulin subunit facing the microtubule plus end conferring a structural polarity. Microtubules usually have 13 protofilaments but different protofilament numbers can be found in some organisms and specialized cells. Mg(2+) is required as a cofactor.

The protein localises to the cytoplasm. Its subcellular location is the cytoskeleton. In terms of biological role, tubulin is the major constituent of microtubules, a cylinder consisting of laterally associated linear protofilaments composed of alpha- and beta-tubulin heterodimers. Microtubules grow by the addition of GTP-tubulin dimers to the microtubule end, where a stabilizing cap forms. Below the cap, tubulin dimers are in GDP-bound state, owing to GTPase activity of alpha-tubulin. This chain is Tubulin beta chain (TBB), found in Onchocerca gibsoni.